The sequence spans 1294 residues: Leucine-rich repeat receptor protein kinase MSP1 (1294 aa).

The N-terminal stretch at 1–22 is a signal peptide; it reads MVSNSFWLFILLVSFIPISAWA. LRR repeat units follow at residues 88–112, 113–136, 138–160, 161–184, and 186–207; these read FQSL…LGNL, QNLQ…LYNL, MLKE…IAQL, QHLT…LGSL, and NLEL…TFGN. N-linked (GlcNAc...) asparagine glycosylation is found at N198, N207, and N220. LRR repeat units follow at residues 232–256, 258–280, 282–304, 305–328, 330–352, 353–376, 378–400, 401–422, 423–446, 447–469, 471–493, 494–517, 519–541, 542–565, 566–589, 591–613, 614–637, 649–673, 675–697, 698–721, 722–745, 746–770, and 772–794; these read LTNL…IGQL, NLEL…IGSL, QLKL…ISGL, SSLT…MGEL, NLTQ…LGNC, KKLT…FADL, AIVS…IQKW, KNAR…VLPL, QHLL…ICQA, NSLH…AFKG, TNLT…YLAE, LPLV…LWES, TLLE…IGKL, SVLQ…VGDL, RNLT…LFNC, KLAT…ISHL, TLLD…ICVG, LQHH…IKNC, MVMV…LGEL, TNLT…SGPL, VQLQ…IGQI, LPKI…LLCN, and YLNH…CPDG. Residues N330 and N359 are each glycosylated (N-linked (GlcNAc...) asparagine). N-linked (GlcNAc...) asparagine glycosylation is found at N458 and N472. N-linked (GlcNAc...) asparagine glycosylation is found at N567, N570, and N601. 3 N-linked (GlcNAc...) asparagine glycosylation sites follow: N687, N699, and N704. N-linked (GlcNAc...) asparagine glycosylation is found at N805, N821, and N832. 2 LRR repeats span residues 822–846 and 848–870; these read FTQL…LSDL and SLNY…ICNI. Residues 917 to 937 form a helical membrane-spanning segment; sequence ITICAFTFVIIIVLVLLAVYL. Positions 1002-1282 constitute a Protein kinase domain; the sequence is FSKVHIIGDG…KGLKMTHGME (281 aa). ATP is bound by residues 1008-1016 and K1030; that span reads IGDGGFGTV. Residue D1129 is the Proton acceptor of the active site.

This sequence belongs to the protein kinase superfamily. Ser/Thr protein kinase family. Interacts with TDL1A. As to expression, expressed in anthers and ovules during meiosis.

Its subcellular location is the cell membrane. The enzyme catalyses L-seryl-[protein] + ATP = O-phospho-L-seryl-[protein] + ADP + H(+). It carries out the reaction L-threonyl-[protein] + ATP = O-phospho-L-threonyl-[protein] + ADP + H(+). Receptor-like kinase that plays important roles in restricting the number of cells entering into male and female sporogenesis. Involved in cell specification during anther development and initiation of anther wall formation. In Oryza sativa subsp. japonica (Rice), this protein is Leucine-rich repeat receptor protein kinase MSP1.